A 631-amino-acid chain; its full sequence is 1-deoxy-D-xylulose-5-phosphate synthase (631 aa).

Thiamine diphosphate-binding positions include H87 and 128–130 (GHS). D159 provides a ligand contact to Mg(2+). Thiamine diphosphate is bound by residues 160-161 (GA), N188, F295, and E377. Mg(2+) is bound at residue N188.

The protein belongs to the transketolase family. DXPS subfamily. In terms of assembly, homodimer. Mg(2+) serves as cofactor. Requires thiamine diphosphate as cofactor.

It catalyses the reaction D-glyceraldehyde 3-phosphate + pyruvate + H(+) = 1-deoxy-D-xylulose 5-phosphate + CO2. It functions in the pathway metabolic intermediate biosynthesis; 1-deoxy-D-xylulose 5-phosphate biosynthesis; 1-deoxy-D-xylulose 5-phosphate from D-glyceraldehyde 3-phosphate and pyruvate: step 1/1. Functionally, catalyzes the acyloin condensation reaction between C atoms 2 and 3 of pyruvate and glyceraldehyde 3-phosphate to yield 1-deoxy-D-xylulose-5-phosphate (DXP). The protein is 1-deoxy-D-xylulose-5-phosphate synthase of Pseudomonas putida (strain GB-1).